Reading from the N-terminus, the 569-residue chain is CTP synthase (569 aa).

The Glutamine amidotransferase type-1 domain maps to 313–569 (RIAMVGKYTG…NASLERLKKM (257 aa)). The Nucleophile role is filled by Cys-410. Active-site residues include His-541 and Glu-543.

It belongs to the CTP synthase family.

The catalysed reaction is UTP + L-glutamine + ATP + H2O = CTP + L-glutamate + ADP + phosphate + 2 H(+). It functions in the pathway pyrimidine metabolism; CTP biosynthesis via de novo pathway; CTP from UDP: step 2/2. Functionally, catalyzes the ATP-dependent amination of UTP to CTP with either L-glutamine or ammonia as the source of nitrogen. This Dictyostelium discoideum (Social amoeba) protein is CTP synthase (ctps).